A 73-amino-acid chain; its full sequence is Potassium channel toxin alpha-KTx 27.1 (73 aa).

Residues 1–23 (MKFLFLTLFVCCFIAVLVIPSEA) form the signal peptide.

Belongs to the short scorpion toxin superfamily. Potassium channel inhibitor family. Alpha-KTx 27 subfamily. Contains 4 disulfide bonds. As to expression, expressed by the venom gland.

The protein resides in the secreted. This chain is Potassium channel toxin alpha-KTx 27.1, found in Buthus israelis (Israeli scorpion).